Consider the following 179-residue polypeptide: IMPACT family member in pol 5'region (179 aa).

This sequence belongs to the IMPACT family.

The chain is IMPACT family member in pol 5'region from Thermus thermophilus.